The following is a 244-amino-acid chain: Glutathione S-transferase theta-2 (244 aa).

A GST N-terminal domain is found at 2 to 82 (GLELYLDLLS…YLSSKYQVAD (81 aa)). Residues 40–41 (HL), 53–54 (KV), 66–67 (ES), and 104–107 (DNIR) each bind glutathione. The GST C-terminal domain maps to 88–230 (DLQARAQVHE…AKKTLPVPPP (143 aa)).

Belongs to the GST superfamily. Theta family. As to quaternary structure, homodimer. In terms of tissue distribution, highest values found in liver followed by testis, adrenal gland, kidney, lung, brain and skeletal muscle. In liver, highest expression found in central vein limiting plate hepatocytes. In lung, expressed mainly in club cells of the bronchiolar epithelium and, at low levels, in type II alveolar cells.

The protein resides in the cytoplasm. It is found in the cytosol. It localises to the nucleus. The enzyme catalyses RX + glutathione = an S-substituted glutathione + a halide anion + H(+). In terms of biological role, catalyzes the inactivation of reactive sulfate esters in carcinogenic arylmethanols. Highest activity towards ethacrynic acid and cumene hydroperoxide. The protein is Glutathione S-transferase theta-2 (Gstt2) of Rattus norvegicus (Rat).